The sequence spans 997 residues: MRSYHYLPLLGFVAFPTLLANASLDKNLVDSSLYISNSAHHNQGFTVGIKLKDSYFRKDFNFENPLIYKPNNKTTFGWNYSTLWTQLADGYYDRYNQLLRENNFNWYNNIYYIKDVNLGIESSYTSSLAWNKTFSYPGVRNSFKSDIHDLQYFHFHNDSKSGFGPSRINDPWYPQHDKYVTLSAGRTAEEAKNAGWSIPYNLETQRLFSPVWNRNKDFKWINVFFGFMNRSLSVKSPNINDIVQNAKWIKQGKNGNYFIIFNAYAITQNDGFFEDRPNNIFIATLWNNWWLESTPIYIYRVFWEVELIKTPRVFEQDNVQWNEPVLPKETWVFSIDNKQANAYWSSSNGFKDKVIKDRKIMEAFTRNRQVTQSILNMGKNVVVKPLTDDEEQSLFSNKWDIFKYTPIIPVNAQRFGVDFYVEQHNADLKPPISFSQLSRLWLSQLQFDPNSVVDTLSKTFNEKDLSQKDQLQIMFKKEFTQAIAQISKLNEEIDLATDKATALQKFDSLKSKDSNVNFASLQYLYDLLGMEPTNKEHLIFIRNLPEMLQTIFARAKLLAKVKIGDTLQEITLLKNNVNVFDIKTWEKYLTPQQHASNEYTINFLSLDFIVDGYESENLHFQVVDQLFGAVKNLPTINKIPEGYQYKFKYRSNFSNQQFKEKDFSVPLHKAIKSFSVGELKQRMEKLNDFEKQQIVFVIKNSFAGVDKTVLDVDANSLTFVEDPRQYKLDLGNMNENKGFFYVLADIHNSNELFKLGSTIDPEIIKGQIYFVKQNQIKPNTRTYLFKINTRKLLLDKQKLWFKPHLETQTVSFMFDEFEIGKLDIETSNIQLIDDYEFEFQSDFSLQDEQVLLEKLNIVLSQMNLHVETKNARLNPVNKMAYLTVLKNNQKFNLEFHVDRYTSQLSIQAMLGSQRLFAINYDLKLSQNKQMLYLINKDGLEKSVWFNIKNDSQTKLAQQLARFLKENNFQFRQKPVFDFHTQNKAFALEKLDNKDDTD.

It belongs to the MG414/MG415 family.

This is an uncharacterized protein from Mycoplasma pneumoniae (strain ATCC 29342 / M129 / Subtype 1) (Mycoplasmoides pneumoniae).